The following is a 553-amino-acid chain: Dihydroxy-acid dehydratase (553 aa).

Asp-78 is a Mg(2+) binding site. Cys-119 provides a ligand contact to [2Fe-2S] cluster. Residues Asp-120 and Lys-121 each contribute to the Mg(2+) site. At Lys-121 the chain carries N6-carboxylysine. Cys-192 is a binding site for [2Fe-2S] cluster. Residue Glu-442 coordinates Mg(2+). Ser-468 (proton acceptor) is an active-site residue.

The protein belongs to the IlvD/Edd family. In terms of assembly, homodimer. [2Fe-2S] cluster is required as a cofactor. Mg(2+) serves as cofactor.

It carries out the reaction (2R)-2,3-dihydroxy-3-methylbutanoate = 3-methyl-2-oxobutanoate + H2O. It catalyses the reaction (2R,3R)-2,3-dihydroxy-3-methylpentanoate = (S)-3-methyl-2-oxopentanoate + H2O. It participates in amino-acid biosynthesis; L-isoleucine biosynthesis; L-isoleucine from 2-oxobutanoate: step 3/4. The protein operates within amino-acid biosynthesis; L-valine biosynthesis; L-valine from pyruvate: step 3/4. Functions in the biosynthesis of branched-chain amino acids. Catalyzes the dehydration of (2R,3R)-2,3-dihydroxy-3-methylpentanoate (2,3-dihydroxy-3-methylvalerate) into 2-oxo-3-methylpentanoate (2-oxo-3-methylvalerate) and of (2R)-2,3-dihydroxy-3-methylbutanoate (2,3-dihydroxyisovalerate) into 2-oxo-3-methylbutanoate (2-oxoisovalerate), the penultimate precursor to L-isoleucine and L-valine, respectively. In Campylobacter hominis (strain ATCC BAA-381 / DSM 21671 / CCUG 45161 / LMG 19568 / NCTC 13146 / CH001A), this protein is Dihydroxy-acid dehydratase.